Consider the following 583-residue polypeptide: 1-deoxy-D-xylulose-5-phosphate synthase (583 aa).

Thiamine diphosphate-binding positions include H74 and 115–117 (GHS). Position 146 (D146) interacts with Mg(2+). Thiamine diphosphate is bound by residues 147-148 (GG), N175, F244, and E327. N175 provides a ligand contact to Mg(2+).

The protein belongs to the transketolase family. DXPS subfamily. As to quaternary structure, homodimer. Mg(2+) is required as a cofactor. Requires thiamine diphosphate as cofactor.

It catalyses the reaction D-glyceraldehyde 3-phosphate + pyruvate + H(+) = 1-deoxy-D-xylulose 5-phosphate + CO2. The protein operates within metabolic intermediate biosynthesis; 1-deoxy-D-xylulose 5-phosphate biosynthesis; 1-deoxy-D-xylulose 5-phosphate from D-glyceraldehyde 3-phosphate and pyruvate: step 1/1. Functionally, catalyzes the acyloin condensation reaction between C atoms 2 and 3 of pyruvate and glyceraldehyde 3-phosphate to yield 1-deoxy-D-xylulose-5-phosphate (DXP). This Myxococcus xanthus (strain DK1622) protein is 1-deoxy-D-xylulose-5-phosphate synthase.